Reading from the N-terminus, the 109-residue chain is Hainantoxin-XVIII-2 (109 aa).

The first 18 residues, 1–18, serve as a signal peptide directing secretion; that stretch reads MKLSIIIIATSLVIAVVA. Residues 19-46 constitute a propeptide that is removed on maturation; sequence FPSKDSKAIENDKTEQRMEIVVQETARA. 3 cysteine pairs are disulfide-bonded: C47–C62, C59–C108, and C61–C81.

It belongs to the neurotoxin 25 family. F7 subfamily. In terms of tissue distribution, expressed by the venom gland.

It localises to the secreted. In terms of biological role, putative ion channel inhibitor. The protein is Hainantoxin-XVIII-2 of Cyriopagopus hainanus (Chinese bird spider).